We begin with the raw amino-acid sequence, 289 residues long: Diaminopimelate epimerase (289 aa).

Residues Asn-13, Gln-47, and Asn-67 each contribute to the substrate site. Cys-76 acts as the Proton donor in catalysis. Substrate contacts are provided by residues 77–78 (GN), Asn-167, Asn-200, and 218–219 (ER). Cys-227 acts as the Proton acceptor in catalysis. 228–229 (GT) is a binding site for substrate.

Belongs to the diaminopimelate epimerase family. As to quaternary structure, homodimer.

Its subcellular location is the cytoplasm. It carries out the reaction (2S,6S)-2,6-diaminopimelate = meso-2,6-diaminopimelate. The protein operates within amino-acid biosynthesis; L-lysine biosynthesis via DAP pathway; DL-2,6-diaminopimelate from LL-2,6-diaminopimelate: step 1/1. Its function is as follows. Catalyzes the stereoinversion of LL-2,6-diaminopimelate (L,L-DAP) to meso-diaminopimelate (meso-DAP), a precursor of L-lysine and an essential component of the bacterial peptidoglycan. The polypeptide is Diaminopimelate epimerase (Burkholderia ambifaria (strain ATCC BAA-244 / DSM 16087 / CCUG 44356 / LMG 19182 / AMMD) (Burkholderia cepacia (strain AMMD))).